We begin with the raw amino-acid sequence, 423 residues long: uncharacterized protein (423 aa).

This is an uncharacterized protein from Ictaluridae (bullhead catfishes).